The following is a 339-amino-acid chain: Lipopolysaccharide glucosyltransferase WaaO (339 aa).

Residues 34-39 (GTDKNF) and 131-132 (DA) each bind UDP. 2 residues coordinate Mg(2+): Asp131 and Asp133. 2 consecutive short sequence motifs (DXD) follow at residues 131-133 (DAD) and 220-222 (DQD). Residue His265 coordinates Mg(2+). 265–271 (HYIGPTK) lines the UDP pocket.

It belongs to the glycosyltransferase 8 family. Mg(2+) serves as cofactor.

The catalysed reaction is UDP-glucose + lipopolysaccharide = UDP + alpha-D-glucosyl-lipopolysaccharide.. It catalyses the reaction alpha-D-Gal-(1-&gt;6)-alpha-D-Glc-(1-&gt;3)-[L-alpha-D-Hep-(1-&gt;7)]-4-O-PO3(2-)-L-alpha-D-Hep-(1-&gt;3)-4-O-PO3(2-)-L-alpha-D-Hep-(1-&gt;5)-[alpha-Kdo-(2-&gt;4)]-alpha-Kdo-(2-&gt;6)-lipid A + UDP-alpha-D-glucose = alpha-D-Glc-(1-&gt;3)-[alpha-D-Gal-(1-&gt;6)]-alpha-D-Glc-(1-&gt;3)-[L-alpha-D-Hep-(1-&gt;7)]-4-O-PO3(2-)-L-alpha-D-Hep-(1-&gt;3)-4-O-PO3(2-)-L-alpha-D-Hep-(1-&gt;5)-[alpha-Kdo-(2-&gt;4)]-alpha-Kdo-(2-&gt;6)-lipid A + UDP + H(+). It functions in the pathway bacterial outer membrane biogenesis; LPS core biosynthesis. Functionally, glucosyltransferase involved in the biosynthesis of the core oligosaccharide region of lipopolysaccharide (LPS). Catalyzes the addition of a second glucose (glucose II) to the first outer-core glucose (glucose I). In vitro, can add multiple glucose residues to its lipid acceptor. Activity does not require the branched galactose added by WaaB, but it is higher in the presence of this branched galactose. In the absence of a lipid acceptor, can hydrolyze UDP-glucose, but not UDP-galactose. This chain is Lipopolysaccharide glucosyltransferase WaaO, found in Escherichia coli (strain K12).